A 472-amino-acid chain; its full sequence is Transmembrane protein 8B (472 aa).

The tract at residues 1-37 (MNMPQSLGNQPLPPEPPSLRTPAEGPGATSPPEHCWP) is disordered. Residues 1 to 233 (MNMPQSLGNQ…ADALTYGFQL (233 aa)) are Extracellular-facing. Residues Asn92 and Asn100 are each glycosylated (N-linked (GlcNAc...) asparagine). Positions 182-221 (FLSPCVDDCGPYGQCKLLRTHNYLYAACECKAGWRGWGCT) constitute an EGF-like domain. Cystine bridges form between Cys186-Cys196, Cys190-Cys209, and Cys211-Cys220. The helical transmembrane segment at 234-254 (LSTLLLCLSNLMFLPPVVLAI) threads the bilayer. The Cytoplasmic segment spans residues 255 to 257 (RSR). The helical transmembrane segment at 258–277 (YVLEAAVYTFTMFFSTFYHA) threads the bilayer. At 278–292 (CDQPGIVVFCIMDYD) the chain is on the extracellular side. The helical transmembrane segment at 293-313 (VLQFCDFLGSLMSVWVTVIAM) threads the bilayer. The Cytoplasmic segment spans residues 314–315 (AR). The helical transmembrane segment at 316-336 (LQPVVKQVLYLLGAMLLSMAL) threads the bilayer. The Extracellular portion of the chain corresponds to 337–342 (QLDRHG). Residues 343 to 363 (LWNLLGPSLFALGILATAWTV) form a helical membrane-spanning segment. At 364-379 (RSVRRRHCYPPTWRRW) the chain is on the cytoplasmic side. A helical transmembrane segment spans residues 380–400 (LFCLCPGSLIAGSAILLYAFV). Topologically, residues 401–405 (ETRDN) are extracellular. Residues 406–426 (YFYIHSIWHMLIAGSVGFLLP) traverse the membrane as a helical segment. Topologically, residues 427–472 (PRAKTDRRVPSGARARGCGYQLCINEQEELGLVGPGGATVSSICAS) are cytoplasmic.

The protein belongs to the TMEM8 family. May interact with EZR. In terms of processing, N-glycosylated.

It localises to the cell membrane. The protein localises to the cytoplasm. Its subcellular location is the nucleus. It is found in the mitochondrion. The protein resides in the endoplasmic reticulum. Functionally, may function as a regulator of the EGFR pathway. Probable tumor suppressor which may function in cell growth, proliferation and adhesion. The protein is Transmembrane protein 8B (TMEM8B) of Bos taurus (Bovine).